A 329-amino-acid polypeptide reads, in one-letter code: Beta-ketoacyl-[acyl-carrier-protein] synthase III (329 aa).

Residues Cys-123 and His-256 contribute to the active site. The ACP-binding stretch occupies residues 257–261 (QANIR). Asn-286 is an active-site residue.

This sequence belongs to the thiolase-like superfamily. FabH family. Homodimer.

The protein resides in the cytoplasm. It carries out the reaction malonyl-[ACP] + acetyl-CoA + H(+) = 3-oxobutanoyl-[ACP] + CO2 + CoA. Its pathway is lipid metabolism; fatty acid biosynthesis. In terms of biological role, catalyzes the condensation reaction of fatty acid synthesis by the addition to an acyl acceptor of two carbons from malonyl-ACP. Catalyzes the first condensation reaction which initiates fatty acid synthesis and may therefore play a role in governing the total rate of fatty acid production. Possesses both acetoacetyl-ACP synthase and acetyl transacylase activities. Its substrate specificity determines the biosynthesis of branched-chain and/or straight-chain of fatty acids. The polypeptide is Beta-ketoacyl-[acyl-carrier-protein] synthase III (Burkholderia vietnamiensis (strain G4 / LMG 22486) (Burkholderia cepacia (strain R1808))).